We begin with the raw amino-acid sequence, 128 residues long: Aspartate 1-decarboxylase (128 aa).

Ser25 acts as the Schiff-base intermediate with substrate; via pyruvic acid in catalysis. Ser25 is subject to Pyruvic acid (Ser). Thr57 is a binding site for substrate. The active-site Proton donor is Tyr58. A substrate-binding site is contributed by 73–75; the sequence is GAA.

It belongs to the PanD family. As to quaternary structure, heterooctamer of four alpha and four beta subunits. It depends on pyruvate as a cofactor. In terms of processing, is synthesized initially as an inactive proenzyme, which is activated by self-cleavage at a specific serine bond to produce a beta-subunit with a hydroxyl group at its C-terminus and an alpha-subunit with a pyruvoyl group at its N-terminus.

The protein resides in the cytoplasm. The enzyme catalyses L-aspartate + H(+) = beta-alanine + CO2. It participates in cofactor biosynthesis; (R)-pantothenate biosynthesis; beta-alanine from L-aspartate: step 1/1. Functionally, catalyzes the pyruvoyl-dependent decarboxylation of aspartate to produce beta-alanine. The sequence is that of Aspartate 1-decarboxylase from Moorella thermoacetica (strain ATCC 39073 / JCM 9320).